Here is a 331-residue protein sequence, read N- to C-terminus: Ketol-acid reductoisomerase (NADP(+)) (331 aa).

The 181-residue stretch at 2–182 (ARMYYDADAN…GGTRGGILET (181 aa)) folds into the KARI N-terminal Rossmann domain. NADP(+) is bound by residues 25 to 28 (YGSQ), serine 51, serine 53, and 83 to 86 (DDVQ). Histidine 108 is a catalytic residue. Position 134 (glycine 134) interacts with NADP(+). One can recognise a KARI C-terminal knotted domain in the interval 183-328 (TFREETETDL…KDLRAMFSWL (146 aa)). Mg(2+)-binding residues include aspartate 191, glutamate 195, glutamate 227, and glutamate 231. Serine 252 provides a ligand contact to substrate.

This sequence belongs to the ketol-acid reductoisomerase family. Requires Mg(2+) as cofactor.

The enzyme catalyses (2R)-2,3-dihydroxy-3-methylbutanoate + NADP(+) = (2S)-2-acetolactate + NADPH + H(+). The catalysed reaction is (2R,3R)-2,3-dihydroxy-3-methylpentanoate + NADP(+) = (S)-2-ethyl-2-hydroxy-3-oxobutanoate + NADPH + H(+). It functions in the pathway amino-acid biosynthesis; L-isoleucine biosynthesis; L-isoleucine from 2-oxobutanoate: step 2/4. It participates in amino-acid biosynthesis; L-valine biosynthesis; L-valine from pyruvate: step 2/4. Functionally, involved in the biosynthesis of branched-chain amino acids (BCAA). Catalyzes an alkyl-migration followed by a ketol-acid reduction of (S)-2-acetolactate (S2AL) to yield (R)-2,3-dihydroxy-isovalerate. In the isomerase reaction, S2AL is rearranged via a Mg-dependent methyl migration to produce 3-hydroxy-3-methyl-2-ketobutyrate (HMKB). In the reductase reaction, this 2-ketoacid undergoes a metal-dependent reduction by NADPH to yield (R)-2,3-dihydroxy-isovalerate. In Picosynechococcus sp. (strain ATCC 27264 / PCC 7002 / PR-6) (Agmenellum quadruplicatum), this protein is Ketol-acid reductoisomerase (NADP(+)).